The sequence spans 340 residues: Fructose-1,6-bisphosphatase class 1 (340 aa).

Residues glutamate 107, aspartate 126, leucine 128, and aspartate 129 each contribute to the Mg(2+) site. Residue asparagine 215 participates in substrate binding. Mg(2+) is bound at residue glutamate 287.

Belongs to the FBPase class 1 family. In terms of assembly, homotetramer. Requires Mg(2+) as cofactor.

It is found in the cytoplasm. The catalysed reaction is beta-D-fructose 1,6-bisphosphate + H2O = beta-D-fructose 6-phosphate + phosphate. The protein operates within carbohydrate biosynthesis; gluconeogenesis. In Brucella ovis (strain ATCC 25840 / 63/290 / NCTC 10512), this protein is Fructose-1,6-bisphosphatase class 1.